Here is a 460-residue protein sequence, read N- to C-terminus: Transcription factor AP-2-beta (460 aa).

Lys21 participates in a covalent cross-link: Glycyl lysine isopeptide (Lys-Gly) (interchain with G-Cter in SUMO). The disordered stretch occupies residues 30–139 (HDGVPSHSSR…PQLSGLDPRR (110 aa)). The segment covering 35–51 (SHSSRLSQLGSVSQGPY) has biased composition (polar residues). A compositionally biased stretch (low complexity) spans 121–132 (LLPQPRAALPQL). Ser258 carries the post-translational modification Phosphoserine; by PKA. Positions 435–460 (NTTTNRHTSGEGPGSKTGDKEEKHRK) are disordered. A compositionally biased stretch (basic and acidic residues) spans 451–460 (TGDKEEKHRK).

It belongs to the AP-2 family. Binds DNA as a dimer. Can form homodimers or heterodimers with other AP-2 family members. Interacts with CITED4. Interacts with UBE2I. Interacts with KCTD1; this interaction represses transcription activation. Interacts with CITED2 (via C-terminus); the interaction stimulates TFAP2B-transcriptional activity. In terms of processing, sumoylated on Lys-21; which inhibits transcriptional activity.

The protein localises to the nucleus. In terms of biological role, sequence-specific DNA-binding protein that interacts with inducible viral and cellular enhancer elements to regulate transcription of selected genes. AP-2 factors bind to the consensus sequence 5'-GCCNNNGGC-3' and activate genes involved in a large spectrum of important biological functions including proper eye, face, body wall, limb and neural tube development. They also suppress a number of genes including MCAM/MUC18, C/EBP alpha and MYC. AP-2-beta appears to be required for normal face and limb development and for proper terminal differentiation and function of renal tubular epithelia. The sequence is that of Transcription factor AP-2-beta (TFAP2B) from Canis lupus familiaris (Dog).